A 1055-amino-acid polypeptide reads, in one-letter code: Protein SUPPRESSOR OF QUENCHING 1, chloroplastic (1055 aa).

The transit peptide at 1 to 56 (MALKLTSPPSVFSQSRRLSSSSLIPIRSKSTFTGFRSRTGVYLSKTTALQSSTKLS) directs the protein to the chloroplast. Val57 carries the N-acetylvaline modification. Residues 59-327 (AESPAATIAT…FQGSRRDILR (269 aa)) are Stromal-facing. Residue Asp80 is the Nucleophile of the active site. Mg(2+)-binding residues include Asp80 and Asp82. Residue Asp80 participates in substrate binding. Asp82 (proton donor) is an active-site residue. Substrate-binding positions include Glu89, 118-122 (TGEAK), 141-144 (AKER), and 183-189 (SSADRIK). Residue Asp242 coordinates Mg(2+). Residues 328–345 (YGSLGIALSCVYFAATNW) traverse the membrane as a helical segment. Residues 346 to 1055 (KAMQYASPKA…AGGLQLQGTR (710 aa)) are Lumenal-facing. The 178-residue stretch at 359–536 (ALVGAKSPSF…LDDVVAAALT (178 aa)) folds into the Thioredoxin domain. Cysteines 431 and 434 form a disulfide. 5 NHL repeats span residues 565-597 (PLKFPGKLAIDTLNNRLFISDSNHNRIIVTDLE), 611-647 (GFQDGSFEDAAFNRPQGLAYNAKKNLLYVADTENHAL), 673-712 (GRKGTKQLLNSPWDVCFEPVNEKVYIAMAGQHQIWEYSVL), 802-832 (LQHPLGVLCANDGQIYLTDSYNHKIKKLDPV), and 854-887 (GAQLSEPAGLAITENGRLFVADTNNSLIRYIDLN).

The protein in the N-terminal section; belongs to the HAD-like hydrolase superfamily. It in the C-terminal section; belongs to the thioredoxin family. The cofactor is Mg(2+).

The protein resides in the plastid. The protein localises to the chloroplast thylakoid membrane. Functionally, required to maintain light harvesting efficiency, especially during nonphotochemical quenching (NPQ) recovery, via the regulation of chlorophyll excited-state lifetime probably by preventing the formation of a slowly reversible form of antenna quenching. This is Protein SUPPRESSOR OF QUENCHING 1, chloroplastic from Arabidopsis thaliana (Mouse-ear cress).